The sequence spans 734 residues: Methylcrotonoyl-CoA carboxylase subunit alpha, mitochondrial (734 aa).

The N-terminal 25 residues, 1–25, are a transit peptide targeting the mitochondrion; that stretch reads MSMMTVWALRRNVRRKNHSMLVRYI. The region spanning 37–484 is the Biotin carboxylation domain; the sequence is CIEKILVANR…ETHFIEHHKS (448 aa). ATP is bound by residues lysine 152, glutamate 236, and histidine 271. Residues 156 to 354 form the ATP-grasp domain; it reads KRIMGAAGVP…LVEWQIRVAN (199 aa). Mn(2+)-binding residues include glutamate 311, glutamate 325, and asparagine 327. Residue arginine 329 is part of the active site. A Phosphoserine modification is found at serine 645. The interval 645–666 is disordered; sequence SEDEEGVQHRTSSETSSHPPGT. One can recognise a Biotinyl-binding domain in the interval 657–733; sequence SETSSHPPGT…SDGSALFRIK (77 aa). Lysine 699 is subject to N6-biotinyllysine.

Probably a heterodimer composed of biotin-containing alpha subunits and beta subunits. Biotin serves as cofactor. Mn(2+) is required as a cofactor. In terms of tissue distribution, in roots, cotyledons, leaves, flowers, ovaries, siliques and embryos.

The protein localises to the mitochondrion matrix. The catalysed reaction is 3-methylbut-2-enoyl-CoA + hydrogencarbonate + ATP = 3-methyl-(2E)-glutaconyl-CoA + ADP + phosphate + H(+). It functions in the pathway amino-acid degradation; L-leucine degradation; (S)-3-hydroxy-3-methylglutaryl-CoA from 3-isovaleryl-CoA: step 2/3. In terms of biological role, biotin-attachment subunit of the 3-methylcrotonyl-CoA carboxylase, an enzyme that catalyzes the conversion of 3-methylcrotonyl-CoA to 3-methylglutaconyl-CoA, a critical step for leucine and isovaleric acid catabolism. The chain is Methylcrotonoyl-CoA carboxylase subunit alpha, mitochondrial (MCCA) from Arabidopsis thaliana (Mouse-ear cress).